The primary structure comprises 162 residues: uncharacterized protein (162 aa).

This is an uncharacterized protein from Aedes vexans (Inland floodwater mosquito).